The primary structure comprises 347 residues: D-alanine--D-alanine ligase (347 aa).

The 203-residue stretch at K131–D333 folds into the ATP-grasp domain. E161 to E216 is an ATP binding site. Mg(2+) is bound by residues D287, E300, and N302.

The protein belongs to the D-alanine--D-alanine ligase family. The cofactor is Mg(2+). Mn(2+) serves as cofactor.

The protein localises to the cytoplasm. It carries out the reaction 2 D-alanine + ATP = D-alanyl-D-alanine + ADP + phosphate + H(+). Its pathway is cell wall biogenesis; peptidoglycan biosynthesis. In terms of biological role, cell wall formation. The chain is D-alanine--D-alanine ligase from Streptococcus pneumoniae (strain JJA).